The chain runs to 355 residues: Galactoside 2-alpha-L-fucosyltransferase (355 aa).

The Cytoplasmic portion of the chain corresponds to 1–15 (MRNVKGLFSYMTKTK). A helical; Signal-anchor for type II membrane protein membrane pass occupies residues 16 to 36 (SFYISIIVIIFIIFIVNRMGP). Topologically, residues 37–355 (RNYNYKQIGT…MSRNGSIISK (319 aa)) are lumenal. N-linked (GlcNAc...) asparagine glycans are attached at residues N92, N311, and N349.

Belongs to the glycosyltransferase 11 family. In terms of tissue distribution, expression is restricted to the 20 intestinal cells in larvae and adult.

The protein resides in the golgi apparatus. The protein localises to the golgi stack membrane. It functions in the pathway protein modification; protein glycosylation. Selectively catalyzes the addition of fucose in alpha 1-2 linkage to Gal-beta-(1-&gt;4)-Xyl-beta-R, Gal-beta-(1-&gt;6)-GlcNAc-R, Gal-beta-(1-&gt;3)-Gal-beta-(1-&gt;4)-Glc and Gal-beta-(1-&gt;3)-Gal-beta-(1-&gt;4)-Xyl-R acceptors but not Gal-beta-(1-&gt;3)-GlcNAc-beta-(1-&gt;3)-Gal-beta-(1-&gt;4)-Glc. Unlike in mammals, unable to fucosylate Gal-beta-(1-&gt;4)-Glc-beta-R. The protein is Galactoside 2-alpha-L-fucosyltransferase of Caenorhabditis elegans.